The sequence spans 305 residues: Superoxide dismutase [Fe] 2, chloroplastic (305 aa).

Residues 1 to 46 (MMNVAVTATPSSLLYSPLLLPSQGPNRRMQWKRNGKRRLGTKVAVS) constitute a chloroplast transit peptide. Fe cation is bound by residues His77, His129, Asp228, and His232. Residues 270–305 (AVQREQEGTETEDEENPDDEVPEVYLDSDIDVSEVD) are disordered. The span at 277-305 (GTETEDEENPDDEVPEVYLDSDIDVSEVD) shows a compositional bias: acidic residues.

Belongs to the iron/manganese superoxide dismutase family. As to quaternary structure, heterodimer with FSD3. Interacts with MRL7 and PRDA1. Fe cation serves as cofactor.

Its subcellular location is the plastid. It localises to the chloroplast thylakoid. The catalysed reaction is 2 superoxide + 2 H(+) = H2O2 + O2. Activated by cpn20/cpn21 (in vitro). Functionally, destroys superoxide anion radicals which are normally produced within the cells and which are toxic to biological systems. Plays important role in chloroplast development, particularly in the maintenance of thylakoids membranes. Seems to act as a heterodimer with FSD3. This Arabidopsis thaliana (Mouse-ear cress) protein is Superoxide dismutase [Fe] 2, chloroplastic (FSD2).